We begin with the raw amino-acid sequence, 463 residues long: Glutamate--tRNA ligase 1 (463 aa).

A 'HIGH' region motif is present at residues 11–21; it reads PSPTGYLHIGG. Positions 240 to 244 match the 'KMSKS' region motif; the sequence is KLSKR. K243 is a binding site for ATP.

This sequence belongs to the class-I aminoacyl-tRNA synthetase family. Glutamate--tRNA ligase type 1 subfamily. In terms of assembly, monomer.

Its subcellular location is the cytoplasm. It carries out the reaction tRNA(Glu) + L-glutamate + ATP = L-glutamyl-tRNA(Glu) + AMP + diphosphate. Catalyzes the attachment of glutamate to tRNA(Glu) in a two-step reaction: glutamate is first activated by ATP to form Glu-AMP and then transferred to the acceptor end of tRNA(Glu). The sequence is that of Glutamate--tRNA ligase 1 from Campylobacter jejuni subsp. doylei (strain ATCC BAA-1458 / RM4099 / 269.97).